We begin with the raw amino-acid sequence, 230 residues long: MYDVTEWKHVFKLDPNKEISDEQLEAICESGTDAILIGGSDNVTEDNVLQLMSKVRRFLVPCVLEISTHEMIVPGFDLYFIPTVLNSSHPDWIVGLHKDAMKEFGDLMSMEEIVPEGYVILNEECKAAKLTEANTALDIDDVRAYARVAEHLMKLPIFYLEYSGTLGDIELVKETKAVLSDTVLFYGGGIENAKQAEDFAQHADVVVVGNVIYDNFKEALKTVSAVKKSS.

Lys-12 provides a ligand contact to sn-glycerol 1-phosphate. Mg(2+) is bound by residues Asp-14 and Ser-40. Residues 159–164, Gly-189, and 209–210 contribute to the sn-glycerol 1-phosphate site; these read YLEYSG and GN.

This sequence belongs to the GGGP/HepGP synthase family. Group I subfamily. As to quaternary structure, homodimer. Mg(2+) serves as cofactor.

It catalyses the reaction sn-glycerol 1-phosphate + all-trans-heptaprenyl diphosphate = 3-heptaprenyl-sn-glycero-1-phosphate + diphosphate. It functions in the pathway membrane lipid metabolism; glycerophospholipid metabolism. Functionally, prenyltransferase that catalyzes in vivo the transfer of the heptaprenyl moiety of heptaprenyl pyrophosphate (HepPP; 35 carbon atoms) to the C3 hydroxyl of sn-glycerol-1-phosphate (G1P), producing heptaprenylglyceryl phosphate (HepGP). This reaction is an ether-bond-formation step in the biosynthesis of archaea-type G1P-based membrane lipids found in Bacillales. The chain is Heptaprenylglyceryl phosphate synthase from Bacillus pumilus (strain SAFR-032).